A 239-amino-acid chain; its full sequence is Ribonuclease PH (239 aa).

Phosphate contacts are provided by residues arginine 86 and 124-126 (GTR).

The protein belongs to the RNase PH family. In terms of assembly, homohexameric ring arranged as a trimer of dimers.

The enzyme catalyses tRNA(n+1) + phosphate = tRNA(n) + a ribonucleoside 5'-diphosphate. Phosphorolytic 3'-5' exoribonuclease that plays an important role in tRNA 3'-end maturation. Removes nucleotide residues following the 3'-CCA terminus of tRNAs; can also add nucleotides to the ends of RNA molecules by using nucleoside diphosphates as substrates, but this may not be physiologically important. Probably plays a role in initiation of 16S rRNA degradation (leading to ribosome degradation) during starvation. This Marinomonas sp. (strain MWYL1) protein is Ribonuclease PH.